A 395-amino-acid chain; its full sequence is Sulfate adenylyltransferase (395 aa).

It belongs to the sulfate adenylyltransferase family.

The enzyme catalyses sulfate + ATP + H(+) = adenosine 5'-phosphosulfate + diphosphate. It participates in sulfur metabolism; hydrogen sulfide biosynthesis; sulfite from sulfate: step 1/3. This is Sulfate adenylyltransferase from Synechococcus elongatus (strain ATCC 33912 / PCC 7942 / FACHB-805) (Anacystis nidulans R2).